A 64-amino-acid chain; its full sequence is Large ribosomal subunit protein bL35 (64 aa).

A compositionally biased stretch (basic residues) spans M1 to R24. A disordered region spans residues M1 to A64. The span at E25–K35 shows a compositional bias: basic and acidic residues. A compositionally biased stretch (basic residues) spans K36 to H45.

The protein belongs to the bacterial ribosomal protein bL35 family.

The protein is Large ribosomal subunit protein bL35 of Prosthecochloris aestuarii (strain DSM 271 / SK 413).